The sequence spans 159 residues: Ribosomal RNA large subunit methyltransferase H (159 aa).

S-adenosyl-L-methionine contacts are provided by residues leucine 76, glycine 108, and phenylalanine 127–phenylalanine 132.

The protein belongs to the RNA methyltransferase RlmH family. As to quaternary structure, homodimer.

Its subcellular location is the cytoplasm. The enzyme catalyses pseudouridine(1915) in 23S rRNA + S-adenosyl-L-methionine = N(3)-methylpseudouridine(1915) in 23S rRNA + S-adenosyl-L-homocysteine + H(+). Its function is as follows. Specifically methylates the pseudouridine at position 1915 (m3Psi1915) in 23S rRNA. The protein is Ribosomal RNA large subunit methyltransferase H of Staphylococcus haemolyticus (strain JCSC1435).